A 59-amino-acid polypeptide reads, in one-letter code: uncharacterized protein (59 aa).

ATP is bound at residue G33 to T40.

This is an uncharacterized protein from Methanocaldococcus jannaschii (strain ATCC 43067 / DSM 2661 / JAL-1 / JCM 10045 / NBRC 100440) (Methanococcus jannaschii).